We begin with the raw amino-acid sequence, 398 residues long: Inner membrane protein YjgN (398 aa).

Residues 1-24 (MAQVINEMDVPSHSFVFHGTGERY) are Cytoplasmic-facing. Residues 25–45 (FLICVVNVLLTIITLGIYLPW) traverse the membrane as a helical segment. Over 46-73 (ALMKCKRYLYANMEVNGQRFSYGITGGN) the chain is Periplasmic. Residues 74–94 (VFFSCLVFVFFYFAILMTVSA) form a helical membrane-spanning segment. A topological domain (cytoplasmic) is located at residue aspartate 95. Residues 96-116 (MPLIGCVLTLSLLVLLIFMAA) form a helical membrane-spanning segment. Residues 117 to 142 (KGLRYQALMTSLNGVRFSFNCSMKGV) are Periplasmic-facing. Residues 143–163 (WWVTFFLPILMAIGMGTVFFI) traverse the membrane as a helical segment. Residues 164–175 (STKMLHANSSSS) lie on the Cytoplasmic side of the membrane. Residues 176–196 (VIVSVVLMAIVGIVSIGIFNG) traverse the membrane as a helical segment. Residues 197–228 (TLYSLVMSFLWSNTSFGIHRFKVKLDTAYCIK) lie on the Periplasmic side of the membrane. A helical transmembrane segment spans residues 229-249 (YAILAFLALLPFLAVAGYIIF). Residues 250 to 278 (DQILNAYDSSVYANDDIENLQQFMEMQRK) are Cytoplasmic-facing. Residues 279-299 (MIIAQLIYYFGIAVSTSYLTV) traverse the membrane as a helical segment. At 300–333 (SLRNHFMSNLSLNDGRIRFRSTLTYHGMLYRMCA) the chain is on the periplasmic side. A helical membrane pass occupies residues 334 to 354 (LVVISGITGGLAYPLLKIWMI). The Cytoplasmic segment spans residues 355 to 398 (DWQAKNTYLLGDLDDLPLINKEEQPDKGFLASISRGIMPSLPFL).

It localises to the cell inner membrane. This Escherichia coli O157:H7 protein is Inner membrane protein YjgN (yjgN).